Reading from the N-terminus, the 556-residue chain is 2-succinyl-5-enolpyruvyl-6-hydroxy-3-cyclohexene-1-carboxylate synthase (556 aa).

It belongs to the TPP enzyme family. MenD subfamily. Homodimer. It depends on Mg(2+) as a cofactor. Requires Mn(2+) as cofactor. Thiamine diphosphate is required as a cofactor.

The enzyme catalyses isochorismate + 2-oxoglutarate + H(+) = 5-enolpyruvoyl-6-hydroxy-2-succinyl-cyclohex-3-ene-1-carboxylate + CO2. It functions in the pathway quinol/quinone metabolism; 1,4-dihydroxy-2-naphthoate biosynthesis; 1,4-dihydroxy-2-naphthoate from chorismate: step 2/7. The protein operates within quinol/quinone metabolism; menaquinone biosynthesis. Functionally, catalyzes the thiamine diphosphate-dependent decarboxylation of 2-oxoglutarate and the subsequent addition of the resulting succinic semialdehyde-thiamine pyrophosphate anion to isochorismate to yield 2-succinyl-5-enolpyruvyl-6-hydroxy-3-cyclohexene-1-carboxylate (SEPHCHC). The protein is 2-succinyl-5-enolpyruvyl-6-hydroxy-3-cyclohexene-1-carboxylate synthase of Salmonella heidelberg (strain SL476).